The sequence spans 651 residues: Beta-glucuronidase (651 aa).

A signal peptide spans 1–22; it reads MARGSAVAWAAFGPLLWGCALG. N-linked (GlcNAc...) asparagine glycans are attached at residues N173, N190, N272, and N420. Catalysis depends on E451, which acts as the Proton donor. An N-linked (GlcNAc...) asparagine glycan is attached at N631.

This sequence belongs to the glycosyl hydrolase 2 family. As to quaternary structure, homotetramer.

The protein resides in the lysosome. It carries out the reaction a beta-D-glucuronoside + H2O = D-glucuronate + an alcohol. With respect to regulation, inhibited by L-aspartic acid. Functionally, plays an important role in the degradation of dermatan and keratan sulfates. This chain is Beta-glucuronidase (GUSB), found in Pongo abelii (Sumatran orangutan).